Here is a 796-residue protein sequence, read N- to C-terminus: Transcription factor kayak (796 aa).

Disordered stretches follow at residues 109–132 (AYQQ…SNTS), 315–341 (VVNN…SNTV), 374–429 (FNCG…GSNG), and 442–490 (VGSA…RNKL). A compositionally biased stretch (low complexity) spans 402-429 (TTDTSSAATDSTSYQNGGHMFGNNGSNG). A compositionally biased stretch (polar residues) spans 447–457 (RGTSSTSNNAT). Residues 478–541 (EEKRRVRRER…HQLNFVLEAH (64 aa)) enclose the bZIP domain. The interval 480–499 (KRRVRRERNKLAAARCRKRR) is basic motif. Residues 506–534 (LSEEVDGLLKKNEDLKKEIEILTNTRHQL) form a leucine-zipper region. A disordered region spans residues 569 to 601 (SSGSNGSHHHNSNSNNSNNNNSNNNNNSNSNDS). At Ser621 the chain carries Phosphoserine. Disordered stretches follow at residues 642–661 (PHDA…PPAA) and 774–796 (SSQN…LVSL).

The protein belongs to the bZIP family. Fos subfamily. In terms of assembly, homodimer. Heterodimer with Jra. The kay-Jra heterodimer binds more stably to the AP-1 site than either of the two proteins alone.

The protein resides in the nucleus. Developmentally regulated transcription factor AP-1 binds and recognizes the enhancer DNA sequence: 5'-TGA[CG]TCA-3'. May play a role in the function or determination of a particular subset of cells in the developing embryo. It is able to carry out its function either independently of or in conjunction with Jra. The protein is Transcription factor kayak of Drosophila grimshawi (Hawaiian fruit fly).